We begin with the raw amino-acid sequence, 659 residues long: uncharacterized protein (659 aa).

16 helical membrane-spanning segments follow: residues Thr-24–Phe-44, Phe-71–Val-91, Ile-115–Val-135, Arg-157–Ile-177, Phe-183–Gly-203, Ala-214–Leu-234, Ala-242–Val-262, Leu-279–Val-299, Leu-311–Ala-331, Phe-365–Val-385, Thr-393–Ser-413, Met-433–Leu-453, Phe-490–Val-510, Glu-517–Ile-537, Ile-550–Met-570, and Ile-596–Leu-616.

This sequence to M.tuberculosis Rv0102.

The protein resides in the cell membrane. This is an uncharacterized protein from Mycobacterium leprae (strain TN).